The sequence spans 258 residues: Envelope glycoprotein L (258 aa).

The N-terminal stretch at methionine 1–serine 31 is a signal peptide. The region spanning glutamine 36–proline 243 is the gL betaherpesvirus-type domain. Residues cysteine 145 and cysteine 150 are joined by a disulfide bond.

This sequence belongs to the herpesviridae glycoprotein L (gL) family. Betaherpesvirinae gL subfamily. In terms of assembly, interacts with glycoprotein H (gH); this interaction is necessary for the correct processing and cell surface expression of gH. Forms the envelope pentamer complex (PC) composed of gH, gL, UL128, UL130, and UL131A. The pentamer interacts with host NRP2. Forms the envelope trimer complex composed of gH, gL, and gO. The trimer interacts with host PDGFRA.

The protein resides in the virion membrane. Its subcellular location is the host cell membrane. It localises to the host Golgi apparatus. The protein localises to the host trans-Golgi network. The heterodimer glycoprotein H-glycoprotein L is required for the fusion of viral and plasma membranes leading to virus entry into the host cell. Acts as a functional inhibitor of gH and maintains gH in an inhibited form. Upon binding to host integrins, gL dissociates from gH leading to activation of the viral fusion glycoproteins gB and gH. In human cytomegalovirus, forms two distincts complexes to mediate viral entry, a trimer and a pentamer at the surface of the virion envelope. The gH-gL-gO trimer is required for infection in fibroblasts by interacting with host PDGFRA. The gH-gL-UL128-UL130-UL131A pentamer is essential for viral entry in epithelial, endothelial and myeloid cells via interaction with host NRP2. The protein is Envelope glycoprotein L of Guinea pig cytomegalovirus (strain 22122) (GPCMV).